The chain runs to 374 residues: Actin-related protein 2/3 complex subunit 2B (374 aa).

This sequence belongs to the ARPC2 family. Component of the Arp2/3 complex composed of ARP2, ARP3, ARPC1/p41-ARC, ARPC2/p34-ARC, ARPC3/p21-ARC, ARPC4/p20-ARC and ARPC5/p16-ARC. As to expression, expressed at low levels in all tissues with a relatively highest expression in inflorescences.

The protein resides in the cytoplasm. The protein localises to the cytoskeleton. It is found in the cell projection. Functionally, functions as actin-binding component of the Arp2/3 complex which is involved in regulation of actin polymerization and together with an activating nucleation-promoting factor (NPF) mediates the formation of branched actin networks. Seems to contact the mother actin filament. Arp2/3 complex plays a critical role in the control of cell morphogenesis via the modulation of cell polarity development. This Arabidopsis thaliana (Mouse-ear cress) protein is Actin-related protein 2/3 complex subunit 2B (ARPC2B).